The chain runs to 128 residues: Putative protein SEM1, isoform 2 (128 aa).

Residues 22–32 (KHGIKRGRRPS) are compositionally biased toward basic residues. Residues 22–42 (KHGIKRGRRPSIRSPAQRARG) form a disordered region.

The polypeptide is Putative protein SEM1, isoform 2 (Homo sapiens (Human)).